Reading from the N-terminus, the 317-residue chain is Long form salivary protein D7L2 (317 aa).

The signal sequence occupies residues 1–20 (MYKLLVALHLILCTVSHVKT). 5 cysteine pairs are disulfide-bonded: C39-C76, C72-C131, C181-C214, C195-C316, and C255-C266. Thromboxane A2 contacts are provided by W58 and Y73. E182, Y264, D281, D284, and M308 together coordinate serotonin.

The protein belongs to the PBP/GOBP family. As to expression, female salivary gland.

It is found in the secreted. Its function is as follows. Modulates blood feeding of female mosquitoes on vertebrate species by binding and sequestering different mediators involved in the host response, such as biogenic amines and eicosanoids. Binds serotonin with high affinity. Binds tryptamine, octopamine, dopamine and noradrenaline with low affinity. Binds leukotriene C4, leukotriene D4, leukotriene E4 and U-46619, a stable analog of thromboxane A2. Does not bind leukotriene B4, adrenaline, histamine and ADP. Inhibits platelet aggregation induced by low concentrations of collagen and arachidonic acid but not by ADP or adrenaline. In Anopheles darlingi (Mosquito), this protein is Long form salivary protein D7L2.